Consider the following 313-residue polypeptide: Probable cell division protein WhiA (313 aa).

The segment at residues 280 to 313 is a DNA-binding region (H-T-H motif); the sequence is SLKELGAMLNPPIGKSGVNHRLKKLCSIADGLRQ.

The protein belongs to the WhiA family.

Involved in cell division and chromosome segregation. The protein is Probable cell division protein WhiA of Lachnoclostridium phytofermentans (strain ATCC 700394 / DSM 18823 / ISDg) (Clostridium phytofermentans).